Reading from the N-terminus, the 500-residue chain is Cytochrome P450 monooxygenase acrD (500 aa).

Residues 13–32 traverse the membrane as a helical segment; that stretch reads PYLSGTNLVWTLLLVGYIIP. N-linked (GlcNAc...) asparagine glycans are attached at residues Asn210 and Asn414. Cys447 contributes to the heme binding site.

Belongs to the cytochrome P450 family. The cofactor is heme.

The protein resides in the membrane. It functions in the pathway secondary metabolite biosynthesis. In terms of biological role, cytochrome P450 monooxygenase; part of the cluster that mediates the biosynthesis of acurin A, a highly reduced polyketide coupled to a serine via a peptide bond. The activities of the highly reducing polyketide synthase acrA and the nonribosomal peptide synthetase acrB are collectively responsible for the synthesis of the acurin A core structure with a heptaketide backbone produced by acrA covalently fused to a L-serine by acrB. After the formation of the PK-NRP hybrid product, it is detached from acrB by reductive release to set up the formation of the lactam ring by aldol condensation. The hydrolyase acrC then catalyzes water loss to generate a double bond in the ring. This double bond is probably reduced, which is followed by three oxidations at C-22 to generate the carboxylic acid moiety, involving probably the FAD-binding monooxygenase acrE and the cytochrome P450 monooxygenases acrD and acrF. Finally, a last methylation step performed by the O-methyltransferase acrG leads to the production of acurin A. The protein is Cytochrome P450 monooxygenase acrD of Aspergillus aculeatus (strain ATCC 16872 / CBS 172.66 / WB 5094).